The following is a 205-amino-acid chain: Transcriptional regulator GfcR (205 aa).

Belongs to the purine/pyrimidine phosphoribosyltransferase family. GfcR subfamily.

The protein is Transcriptional regulator GfcR of Methanococcus vannielii (strain ATCC 35089 / DSM 1224 / JCM 13029 / OCM 148 / SB).